Consider the following 245-residue polypeptide: Polyhedrin (245 aa).

The protein belongs to the polyhedrin family.

In terms of biological role, major component of the virus occlusion bodies, which are large proteinaceous structures (polyhedra), that protect the virus from the outside environment for extended periods until they are ingested by insect larvae. This Lepidoptera (butterflies and moths) protein is Polyhedrin (PH).